A 203-amino-acid chain; its full sequence is Translation initiation factor IF-3 (203 aa).

Residues 168–203 form a disordered region; the sequence is QLSPKKKESATKKPATPKPATPAAVKAEKPAGDNEE. Residues 193-203 are compositionally biased toward basic and acidic residues; the sequence is KAEKPAGDNEE.

Belongs to the IF-3 family. Monomer.

The protein resides in the cytoplasm. Functionally, IF-3 binds to the 30S ribosomal subunit and shifts the equilibrium between 70S ribosomes and their 50S and 30S subunits in favor of the free subunits, thus enhancing the availability of 30S subunits on which protein synthesis initiation begins. The protein is Translation initiation factor IF-3 of Bacteroides fragilis (strain ATCC 25285 / DSM 2151 / CCUG 4856 / JCM 11019 / LMG 10263 / NCTC 9343 / Onslow / VPI 2553 / EN-2).